A 211-amino-acid chain; its full sequence is Uracil phosphoribosyltransferase (211 aa).

5-phospho-alpha-D-ribose 1-diphosphate is bound by residues Arg-77, Arg-102, and Asp-129 to Ser-137. Uracil is bound by residues Ile-192 and Gly-197–Ala-199. Residue Asp-198 participates in 5-phospho-alpha-D-ribose 1-diphosphate binding.

This sequence belongs to the UPRTase family. Mg(2+) is required as a cofactor.

It catalyses the reaction UMP + diphosphate = 5-phospho-alpha-D-ribose 1-diphosphate + uracil. It functions in the pathway pyrimidine metabolism; UMP biosynthesis via salvage pathway; UMP from uracil: step 1/1. Allosterically activated by GTP. Functionally, catalyzes the conversion of uracil and 5-phospho-alpha-D-ribose 1-diphosphate (PRPP) to UMP and diphosphate. This is Uracil phosphoribosyltransferase from Corynebacterium glutamicum (strain R).